The sequence spans 222 residues: Small ribosomal subunit protein eS1 (222 aa).

The protein belongs to the eukaryotic ribosomal protein eS1 family.

This chain is Small ribosomal subunit protein eS1, found in Methanocaldococcus jannaschii (strain ATCC 43067 / DSM 2661 / JAL-1 / JCM 10045 / NBRC 100440) (Methanococcus jannaschii).